Reading from the N-terminus, the 296-residue chain is Porphobilinogen deaminase (296 aa).

An S-(dipyrrolylmethanemethyl)cysteine modification is found at Cys-235.

The protein belongs to the HMBS family. Monomer. The cofactor is dipyrromethane.

It carries out the reaction 4 porphobilinogen + H2O = hydroxymethylbilane + 4 NH4(+). It functions in the pathway porphyrin-containing compound metabolism; protoporphyrin-IX biosynthesis; coproporphyrinogen-III from 5-aminolevulinate: step 2/4. Functionally, tetrapolymerization of the monopyrrole PBG into the hydroxymethylbilane pre-uroporphyrinogen in several discrete steps. This Alkaliphilus oremlandii (strain OhILAs) (Clostridium oremlandii (strain OhILAs)) protein is Porphobilinogen deaminase.